The sequence spans 324 residues: Probable peptidylglycine alpha-hydroxylating monooxygenase 1 (324 aa).

The N-terminal stretch at 1–22 (MPRFYLLSSCALLAFATSFCNA) is a signal peptide. Intrachain disulfides connect Cys-41–Cys-85 and Cys-73–Cys-101. Residues His-66 and His-67 each contribute to the Cu cation site. His-142 is a Cu cation binding site. N-linked (GlcNAc...) asparagine glycosylation occurs at Asn-182. The Cu cation site is built by His-207, His-209, and Met-284. A disulfide bridge links Cys-264 with Cys-285.

The protein belongs to the copper type II ascorbate-dependent monooxygenase family. It depends on Cu(2+) as a cofactor.

The protein localises to the secreted. The enzyme catalyses a [peptide]-C-terminal glycine + 2 L-ascorbate + O2 = a [peptide]-C-terminal (2S)-2-hydroxyglycine + 2 monodehydro-L-ascorbate radical + H2O. In terms of biological role, monooxygenase that catalyzes an essential reaction in C-terminal alpha-amidation of peptides. Produces an unstable peptidyl(2-hydroxyglycine) intermediate. C-terminal amidation of peptides such as neuropeptides is essential for full biological activity. This is Probable peptidylglycine alpha-hydroxylating monooxygenase 1 from Caenorhabditis elegans.